Consider the following 68-residue polypeptide: MCAVAYRRSLHYDSWCSKEKTPSNHRVNCLLDPKLLLESPEKLGCYCIDHCNLHLKGQIVWTAPDGGD.

This is Protein RH1 from Pantherophis guttatus (Corn snake).